A 548-amino-acid polypeptide reads, in one-letter code: Thermosome subunit alpha (548 aa).

The segment at 527-548 is disordered; that stretch reads TKPEGGQGGGMPGGMGGMDMGM. Residues 531–548 show a composition bias toward gly residues; it reads GGQGGGMPGGMGGMDMGM.

It belongs to the TCP-1 chaperonin family. Forms a Heterooligomeric complex of two stacked eight-membered rings.

Its function is as follows. Molecular chaperone; binds unfolded polypeptides in vitro, and has a weak ATPase activity. The sequence is that of Thermosome subunit alpha (thsA) from Thermococcus sp. (strain JCM 11816 / KS-1).